Here is a 149-residue protein sequence, read N- to C-terminus: Large ribosomal subunit protein bL9 (149 aa).

Belongs to the bacterial ribosomal protein bL9 family.

Its function is as follows. Binds to the 23S rRNA. The sequence is that of Large ribosomal subunit protein bL9 from Desulforamulus reducens (strain ATCC BAA-1160 / DSM 100696 / MI-1) (Desulfotomaculum reducens).